The chain runs to 141 residues: Transmembrane protein 216 (141 aa).

4 helical membrane-spanning segments follow: residues Ile-15 to Phe-35, Leu-49 to Phe-69, Leu-82 to Leu-102, and Ser-115 to Phe-135.

Part of the tectonic-like complex (also named B9 complex). Interacts with TMEM107.

It localises to the membrane. The protein localises to the cytoplasm. The protein resides in the cytoskeleton. It is found in the cilium basal body. Part of the tectonic-like complex which is required for tissue-specific ciliogenesis and may regulate ciliary membrane composition. The chain is Transmembrane protein 216 (Tmem216) from Rattus norvegicus (Rat).